Here is an 856-residue protein sequence, read N- to C-terminus: Phosphoenolpyruvate synthase (856 aa).

Residue His433 is the Tele-phosphohistidine intermediate of the active site. Substrate is bound by residues Arg523, Arg636, Glu738, Gly759, Ser760, Asn761, and Asp762. Position 738 (Glu738) interacts with Mg(2+). Asp762 lines the Mg(2+) pocket. Cys809 acts as the Proton donor in catalysis.

The protein belongs to the PEP-utilizing enzyme family. The cofactor is Mg(2+).

The catalysed reaction is pyruvate + ATP + H2O = phosphoenolpyruvate + AMP + phosphate + 2 H(+). It participates in carbohydrate biosynthesis; gluconeogenesis. In terms of biological role, catalyzes the phosphorylation of pyruvate to phosphoenolpyruvate. This chain is Phosphoenolpyruvate synthase (ppsA), found in Aquifex aeolicus (strain VF5).